Here is a 494-residue protein sequence, read N- to C-terminus: Trigger factor (494 aa).

A PPIase FKBP-type domain is found at 169–254 (GDRITMDYVG…VKDVAAPGAV (86 aa)). The segment at 440–494 (LLAEDEGEAKAETKKAAPKKKAAAKSEAAEAGEGEEAAPKKKAAPKKKASEDSAE) is disordered.

The protein belongs to the FKBP-type PPIase family. Tig subfamily.

Its subcellular location is the cytoplasm. It carries out the reaction [protein]-peptidylproline (omega=180) = [protein]-peptidylproline (omega=0). Functionally, involved in protein export. Acts as a chaperone by maintaining the newly synthesized protein in an open conformation. Functions as a peptidyl-prolyl cis-trans isomerase. The sequence is that of Trigger factor from Rhizobium etli (strain ATCC 51251 / DSM 11541 / JCM 21823 / NBRC 15573 / CFN 42).